The following is a 211-amino-acid chain: MPAVRIKICGITRVEDALAAAAAGADAIGLVFYAKSPRAVDIHRAREIVRALPPFVTSVGLFVNASRCELGEILDAVPLDLLQFHGDERAEDCEGHRRPYLKALRVKPGDDIVGRAAAYPGAAGILLDTYVEGVPGGTGAAFDWSLVPTDLGKPLVLAGGLTPDNVGRAVEQVKPYAVDVSGGVEASKGIKDAARVRAFVDAVRSRRRDET.

This sequence belongs to the TrpF family.

It carries out the reaction N-(5-phospho-beta-D-ribosyl)anthranilate = 1-(2-carboxyphenylamino)-1-deoxy-D-ribulose 5-phosphate. It functions in the pathway amino-acid biosynthesis; L-tryptophan biosynthesis; L-tryptophan from chorismate: step 3/5. This chain is N-(5'-phosphoribosyl)anthranilate isomerase, found in Pseudomonas aeruginosa (strain LESB58).